A 347-amino-acid chain; its full sequence is GTP 3',8-cyclase (347 aa).

Residues 12–242 (FRPFGVLRLS…QRIDARWPLR (231 aa)) form the Radical SAM core domain. Arg-19 provides a ligand contact to GTP. [4Fe-4S] cluster contacts are provided by Cys-26 and Cys-30. Tyr-32 serves as a coordination point for S-adenosyl-L-methionine. Cys-33 provides a ligand contact to [4Fe-4S] cluster. Position 65 (Arg-65) interacts with GTP. Residue Gly-69 participates in S-adenosyl-L-methionine binding. Thr-104 provides a ligand contact to GTP. Residue Ser-129 participates in S-adenosyl-L-methionine binding. Residue Lys-178 participates in GTP binding. Met-212 is a binding site for S-adenosyl-L-methionine. [4Fe-4S] cluster contacts are provided by Cys-275 and Cys-278. 280-282 (RLR) is a GTP binding site. Cys-292 serves as a coordination point for [4Fe-4S] cluster.

This sequence belongs to the radical SAM superfamily. MoaA family. In terms of assembly, monomer and homodimer. The cofactor is [4Fe-4S] cluster.

The catalysed reaction is GTP + AH2 + S-adenosyl-L-methionine = (8S)-3',8-cyclo-7,8-dihydroguanosine 5'-triphosphate + 5'-deoxyadenosine + L-methionine + A + H(+). Its pathway is cofactor biosynthesis; molybdopterin biosynthesis. Catalyzes the cyclization of GTP to (8S)-3',8-cyclo-7,8-dihydroguanosine 5'-triphosphate. In Synechococcus sp. (strain WH7803), this protein is GTP 3',8-cyclase.